We begin with the raw amino-acid sequence, 270 residues long: UPF0354 protein BCA_4815 (270 aa).

Belongs to the UPF0354 family.

The chain is UPF0354 protein BCA_4815 from Bacillus cereus (strain 03BB102).